The primary structure comprises 257 residues: Hydroxyethylthiazole kinase (257 aa).

Met-49 lines the substrate pocket. ATP is bound by residues Arg-124 and Thr-170. Gly-197 lines the substrate pocket.

Belongs to the Thz kinase family. Requires Mg(2+) as cofactor.

The enzyme catalyses 5-(2-hydroxyethyl)-4-methylthiazole + ATP = 4-methyl-5-(2-phosphooxyethyl)-thiazole + ADP + H(+). It functions in the pathway cofactor biosynthesis; thiamine diphosphate biosynthesis; 4-methyl-5-(2-phosphoethyl)-thiazole from 5-(2-hydroxyethyl)-4-methylthiazole: step 1/1. In terms of biological role, catalyzes the phosphorylation of the hydroxyl group of 4-methyl-5-beta-hydroxyethylthiazole (THZ). The chain is Hydroxyethylthiazole kinase from Klebsiella pneumoniae (strain 342).